A 507-amino-acid polypeptide reads, in one-letter code: Maturase K (507 aa).

This sequence belongs to the intron maturase 2 family. MatK subfamily.

The protein resides in the plastid. It localises to the chloroplast. Usually encoded in the trnK tRNA gene intron. Probably assists in splicing its own and other chloroplast group II introns. This is Maturase K from Asimina triloba (Pawpaw).